The chain runs to 251 residues: UPF0309 protein SCO4393 (251 aa).

In terms of domain architecture, SIS spans 36-220 (LADTVQNGGR…AATLADRGIE (185 aa)).

The protein belongs to the UPF0309 family.

The polypeptide is UPF0309 protein SCO4393 (Streptomyces coelicolor (strain ATCC BAA-471 / A3(2) / M145)).